The primary structure comprises 393 residues: Erythronate-4-phosphate dehydrogenase (393 aa).

Residues Ser-57 and Thr-79 each contribute to the substrate site. Asp-159 provides a ligand contact to NAD(+). Arg-229 is an active-site residue. Asp-253 lines the NAD(+) pocket. Glu-258 is a catalytic residue. His-275 (proton donor) is an active-site residue. Gly-278 contributes to the NAD(+) binding site. Tyr-279 is a binding site for substrate.

It belongs to the D-isomer specific 2-hydroxyacid dehydrogenase family. PdxB subfamily. In terms of assembly, homodimer.

It is found in the cytoplasm. The catalysed reaction is 4-phospho-D-erythronate + NAD(+) = (R)-3-hydroxy-2-oxo-4-phosphooxybutanoate + NADH + H(+). The protein operates within cofactor biosynthesis; pyridoxine 5'-phosphate biosynthesis; pyridoxine 5'-phosphate from D-erythrose 4-phosphate: step 2/5. Its function is as follows. Catalyzes the oxidation of erythronate-4-phosphate to 3-hydroxy-2-oxo-4-phosphonooxybutanoate. The chain is Erythronate-4-phosphate dehydrogenase from Colwellia psychrerythraea (strain 34H / ATCC BAA-681) (Vibrio psychroerythus).